The chain runs to 293 residues: 33 kDa chaperonin (293 aa).

Cystine bridges form between cysteine 239-cysteine 241 and cysteine 272-cysteine 275.

Belongs to the HSP33 family. Post-translationally, under oxidizing conditions two disulfide bonds are formed involving the reactive cysteines. Under reducing conditions zinc is bound to the reactive cysteines and the protein is inactive.

Its subcellular location is the cytoplasm. Functionally, redox regulated molecular chaperone. Protects both thermally unfolding and oxidatively damaged proteins from irreversible aggregation. Plays an important role in the bacterial defense system toward oxidative stress. This chain is 33 kDa chaperonin, found in Limosilactobacillus fermentum (strain NBRC 3956 / LMG 18251) (Lactobacillus fermentum).